The chain runs to 349 residues: tRNA-specific 2-thiouridylase MnmA (349 aa).

Residues 7-14 and Leu-33 contribute to the ATP site; that span reads GLSGGVDS. The active-site Nucleophile is Cys-94. Cys-94 and Cys-193 are oxidised to a cystine. Gly-119 provides a ligand contact to ATP. Residues 143–145 are interaction with tRNA; it reads KDQ. Cys-193 functions as the Cysteine persulfide intermediate in the catalytic mechanism. The tract at residues 298–299 is interaction with tRNA; sequence RY.

This sequence belongs to the MnmA/TRMU family.

Its subcellular location is the cytoplasm. It catalyses the reaction S-sulfanyl-L-cysteinyl-[protein] + uridine(34) in tRNA + AH2 + ATP = 2-thiouridine(34) in tRNA + L-cysteinyl-[protein] + A + AMP + diphosphate + H(+). Functionally, catalyzes the 2-thiolation of uridine at the wobble position (U34) of tRNA, leading to the formation of s(2)U34. In Gloeothece citriformis (strain PCC 7424) (Cyanothece sp. (strain PCC 7424)), this protein is tRNA-specific 2-thiouridylase MnmA.